The chain runs to 611 residues: Growth hormone receptor (611 aa).

The signal sequence occupies residues 1–20 (MDLRHLLLTLVLVCANDSLS). Asn-16 is a glycosylation site (N-linked (GlcNAc...) asparagine). Residues 21-240 (ASDDVLRLPQ…EFVHCAEEIE (220 aa)) are Extracellular-facing. Cysteines 34 and 44 form a disulfide. N-linked (GlcNAc...) asparagine glycosylation is present at Asn-53. A disulfide bond links Cys-75 and Cys-86. N-linked (GlcNAc...) asparagine glycosylation occurs at Asn-89. Cys-100 and Cys-114 are joined by a disulfide. In terms of domain architecture, Fibronectin type-III spans 125 to 228 (PPVHLNWTLL…EILYVSFSQA (104 aa)). Residues Asn-130, Asn-135, and Asn-174 are each glycosylated (N-linked (GlcNAc...) asparagine). Positions 214 to 218 (FGEFS) match the WSXWS motif motif. Residues 241–264 (FPWFLVVIFGACGLAVTVILILLS) traverse the membrane as a helical segment. Residues 265 to 611 (KQSRLKMLIF…STDQLNKIMP (347 aa)) lie on the Cytoplasmic side of the membrane. The segment at 270-355 (KMLIFPPVPV…HLKSHSCLGA (86 aa)) is required for JAK2 binding. The Box 1 motif motif lies at 273–281 (IFPPVPVPK). The UbE motif signature appears at 316–325 (DLWVEFIELD). The interval 411–455 (SLPSLANTDTQQPRMSTRPENSQPWPPFADSIDAASPSAHNQLSN) is disordered. Residues 414-433 (SLANTDTQQPRMSTRPENSQ) are compositionally biased toward polar residues.

The protein belongs to the type I cytokine receptor family. Type 1 subfamily. In terms of processing, the soluble form (GHBP) is produced by phorbol ester-promoted proteolytic cleavage at the cell surface (shedding) by ADAM17/TACE.

It is found in the cell membrane. The protein localises to the secreted. Its function is as follows. Receptor for pituitary gland growth hormone (GH1) involved in regulating postnatal body growth. On ligand binding, couples to the JAK2/STAT5 pathway. The soluble form (GHBP) acts as a reservoir of growth hormone in plasma and may be a modulator/inhibitor of GH signaling. The protein is Growth hormone receptor (GHR) of Columba livia (Rock dove).